A 274-amino-acid polypeptide reads, in one-letter code: Ribosomal RNA small subunit methyltransferase A (274 aa).

Positions 28, 30, 55, 77, 103, and 122 each coordinate S-adenosyl-L-methionine.

This sequence belongs to the class I-like SAM-binding methyltransferase superfamily. rRNA adenine N(6)-methyltransferase family. RsmA subfamily.

Its subcellular location is the cytoplasm. It carries out the reaction adenosine(1518)/adenosine(1519) in 16S rRNA + 4 S-adenosyl-L-methionine = N(6)-dimethyladenosine(1518)/N(6)-dimethyladenosine(1519) in 16S rRNA + 4 S-adenosyl-L-homocysteine + 4 H(+). In terms of biological role, specifically dimethylates two adjacent adenosines (A1518 and A1519) in the loop of a conserved hairpin near the 3'-end of 16S rRNA in the 30S particle. May play a critical role in biogenesis of 30S subunits. This Sinorhizobium medicae (strain WSM419) (Ensifer medicae) protein is Ribosomal RNA small subunit methyltransferase A.